The primary structure comprises 476 residues: DnaJ protein P58IPK homolog A (476 aa).

Positions 1-28 (MVAMARWPWRVLLPLLLLHSSPVFFVFA) are cleaved as a signal peptide. TPR repeat units follow at residues 36–69 (PSTL…EPNH), 70–103 (SEAY…KPGS), 116–150 (AQNA…SPDC), 152–184 (KAKL…DEDN), 185–218 (LDAL…DPEH), 231–264 (LVKK…DPDH), 269–302 (VHLY…DGEL), and 304–336 (DALT…SPQD). The J domain occupies 357-423 (DWYKILGISK…DKRVRYDRGE (67 aa)).

Interacts with BIP1.

It is found in the endoplasmic reticulum lumen. Its function is as follows. May play a role in protein folding in the endoplasmic reticulum. The protein is DnaJ protein P58IPK homolog A of Oryza sativa subsp. japonica (Rice).